Reading from the N-terminus, the 103-residue chain is Co-chaperonin GroES (103 aa).

The protein belongs to the GroES chaperonin family. Heptamer of 7 subunits arranged in a ring. Interacts with the chaperonin GroEL.

Its subcellular location is the cytoplasm. Its function is as follows. Together with the chaperonin GroEL, plays an essential role in assisting protein folding. The GroEL-GroES system forms a nano-cage that allows encapsulation of the non-native substrate proteins and provides a physical environment optimized to promote and accelerate protein folding. GroES binds to the apical surface of the GroEL ring, thereby capping the opening of the GroEL channel. The chain is Co-chaperonin GroES from Synechococcus elongatus (strain ATCC 33912 / PCC 7942 / FACHB-805) (Anacystis nidulans R2).